We begin with the raw amino-acid sequence, 263 residues long: UPF0758 protein Pden_2304 (263 aa).

The 123-residue stretch at 141–263 (VLTSWDALLD…ELSFRSEGLL (123 aa)) folds into the MPN domain. Residues His212, His214, and Asp225 each coordinate Zn(2+). A JAMM motif motif is present at residues 212–225 (HNHPSGDPTPSQAD).

The protein belongs to the UPF0758 family.

The polypeptide is UPF0758 protein Pden_2304 (Paracoccus denitrificans (strain Pd 1222)).